The chain runs to 93 residues: Small ribosomal subunit protein uS19 (93 aa).

The interval 73-93 (EFSPTRTYRGHNKKDKKIQKK) is disordered. A compositionally biased stretch (basic residues) spans 80 to 93 (YRGHNKKDKKIQKK).

It belongs to the universal ribosomal protein uS19 family.

Its function is as follows. Protein S19 forms a complex with S13 that binds strongly to the 16S ribosomal RNA. The protein is Small ribosomal subunit protein uS19 (rpsS) of Aster yellows phytoplasma.